Here is a 429-residue protein sequence, read N- to C-terminus: Glutamyl-tRNA reductase (429 aa).

Substrate contacts are provided by residues 56-59 (TCNR), serine 119, 124-126 (EPQ), and glutamine 130. Cysteine 57 acts as the Nucleophile in catalysis. 199–204 (GAGEMI) contributes to the NADP(+) binding site.

This sequence belongs to the glutamyl-tRNA reductase family. Homodimer.

It carries out the reaction (S)-4-amino-5-oxopentanoate + tRNA(Glu) + NADP(+) = L-glutamyl-tRNA(Glu) + NADPH + H(+). Its pathway is porphyrin-containing compound metabolism; protoporphyrin-IX biosynthesis; 5-aminolevulinate from L-glutamyl-tRNA(Glu): step 1/2. Its function is as follows. Catalyzes the NADPH-dependent reduction of glutamyl-tRNA(Glu) to glutamate 1-semialdehyde (GSA). The protein is Glutamyl-tRNA reductase of Janthinobacterium sp. (strain Marseille) (Minibacterium massiliensis).